Here is a 185-residue protein sequence, read N- to C-terminus: Peptidyl-tRNA hydrolase (185 aa).

Tyr-14 provides a ligand contact to tRNA. Residue His-19 is the Proton acceptor of the active site. TRNA is bound by residues Tyr-65, Asn-67, and Asn-113.

Belongs to the PTH family. As to quaternary structure, monomer.

It is found in the cytoplasm. The enzyme catalyses an N-acyl-L-alpha-aminoacyl-tRNA + H2O = an N-acyl-L-amino acid + a tRNA + H(+). Its function is as follows. Hydrolyzes ribosome-free peptidyl-tRNAs (with 1 or more amino acids incorporated), which drop off the ribosome during protein synthesis, or as a result of ribosome stalling. Catalyzes the release of premature peptidyl moieties from peptidyl-tRNA molecules trapped in stalled 50S ribosomal subunits, and thus maintains levels of free tRNAs and 50S ribosomes. This Rickettsia bellii (strain OSU 85-389) protein is Peptidyl-tRNA hydrolase.